Consider the following 335-residue polypeptide: Acyl-CoA Delta(11) desaturase (335 aa).

3 helical membrane-spanning segments follow: residues 39 to 59 (LLTFGYWHIAGLYGLYLCFTS), 64 to 84 (TIILALILNEMAILGITAGAH), and 98 to 118 (LQIILIIFNSLSFQNSAIHWI). Positions 84 to 89 (HRLWAH) match the Histidine box-1 motif. The Histidine box-2 signature appears at 121 to 125 (HRMHH). 2 consecutive transmembrane segments (helical) span residues 182–202 (AIPFIGMICFVLPTIIPMYFW) and 213–235 (TMLRYVFSLNSIFLVNSAAHLYG). The Histidine box-3 motif lies at 261 to 265 (HNYHH). Residues 312-335 (MKRTGDGTDVSGQKYSCESSEVLQ) are disordered. Positions 321 to 335 (VSGQKYSCESSEVLQ) are enriched in polar residues.

It belongs to the fatty acid desaturase type 1 family. Fe cation serves as cofactor. As to expression, detected in pheromone gland.

Its subcellular location is the membrane. The catalysed reaction is an 11,12-saturated fatty acyl-CoA + 2 Fe(II)-[cytochrome b5] + O2 + 2 H(+) = an (11Z)-Delta(11)-fatty acyl-CoA + 2 Fe(III)-[cytochrome b5] + 2 H2O. In terms of biological role, catalyzes the formation of Delta(11) fatty acyl precursors in the pheromone gland, with a preference for myristic acid. The polypeptide is Acyl-CoA Delta(11) desaturase (Choristoneura rosaceana (Oblique banded leafroller)).